Here is an 86-residue protein sequence, read N- to C-terminus: Exodeoxyribonuclease 7 small subunit (86 aa).

Belongs to the XseB family. Heterooligomer composed of large and small subunits.

It is found in the cytoplasm. The catalysed reaction is Exonucleolytic cleavage in either 5'- to 3'- or 3'- to 5'-direction to yield nucleoside 5'-phosphates.. In terms of biological role, bidirectionally degrades single-stranded DNA into large acid-insoluble oligonucleotides, which are then degraded further into small acid-soluble oligonucleotides. This chain is Exodeoxyribonuclease 7 small subunit, found in Xanthomonas axonopodis pv. citri (strain 306).